A 209-amino-acid polypeptide reads, in one-letter code: Outer-membrane lipoprotein LolB (209 aa).

Residues 1–17 (MATVFSRALGALVLGVA) form the signal peptide. Cysteine 18 is lipidated: N-palmitoyl cysteine. Residue cysteine 18 is the site of S-diacylglycerol cysteine attachment.

The protein belongs to the LolB family. As to quaternary structure, monomer.

It is found in the cell outer membrane. Functionally, plays a critical role in the incorporation of lipoproteins in the outer membrane after they are released by the LolA protein. This chain is Outer-membrane lipoprotein LolB, found in Ralstonia nicotianae (strain ATCC BAA-1114 / GMI1000) (Ralstonia solanacearum).